The sequence spans 274 residues: Chemotaxis protein methyltransferase 1 (274 aa).

Residues 1-274 (MSAANADFEL…CSPGIIYRAK (274 aa)) enclose the CheR-type methyltransferase domain. S-adenosyl-L-methionine contacts are provided by residues Asn72, Thr74, Arg78, Glu115, Asp144, 200 to 201 (NL), and 217 to 218 (RN).

It carries out the reaction L-glutamyl-[protein] + S-adenosyl-L-methionine = [protein]-L-glutamate 5-O-methyl ester + S-adenosyl-L-homocysteine. Methylation of the membrane-bound methyl-accepting chemotaxis proteins (MCP) to form gamma-glutamyl methyl ester residues in MCP. The protein is Chemotaxis protein methyltransferase 1 (cheR1) of Pseudomonas aeruginosa (strain ATCC 15692 / DSM 22644 / CIP 104116 / JCM 14847 / LMG 12228 / 1C / PRS 101 / PAO1).